The primary structure comprises 1438 residues: DNA polymerase III PolC-type (1438 aa).

In terms of domain architecture, Exonuclease spans 422-578 (YVVFDVETTG…YDTEATAYIF (157 aa)).

Belongs to the DNA polymerase type-C family. PolC subfamily.

The protein resides in the cytoplasm. It catalyses the reaction DNA(n) + a 2'-deoxyribonucleoside 5'-triphosphate = DNA(n+1) + diphosphate. Functionally, required for replicative DNA synthesis. This DNA polymerase also exhibits 3' to 5' exonuclease activity. The protein is DNA polymerase III PolC-type of Staphylococcus aureus (strain bovine RF122 / ET3-1).